Here is a 79-residue protein sequence, read N- to C-terminus: uncharacterized protein (79 aa).

A helical transmembrane segment spans residues 53–73 (LFFAYMVAYIGFGILSIGMIV).

It localises to the membrane. This is an uncharacterized protein from Escherichia coli O157:H7.